Here is a 178-residue protein sequence, read N- to C-terminus: MEIRDNNKVNLCFAFDNLRKELSRPYGILFTNNKLFLDFVSKSIQQGFKVITVGDYVSRVLEENGIIPFLEVIDGKTKRSIPQRTIVKNKEYKVTNEAGKIRFEIFEIMENILKDRDGGVVFVNGEEDLLVIPVTLSADNGDIVIYGQPNAGAVVIIVNEMIRWRVRDILEKAVVKEC.

Positions 55, 57, 74, 76, and 127 each coordinate GTP.

The protein belongs to the GTP-dependent DPCK family.

The catalysed reaction is 3'-dephospho-CoA + GTP = GDP + CoA + H(+). It participates in cofactor biosynthesis; coenzyme A biosynthesis. Catalyzes the GTP-dependent phosphorylation of the 3'-hydroxyl group of dephosphocoenzyme A to form coenzyme A (CoA). In Saccharolobus islandicus (strain Y.G.57.14 / Yellowstone #1) (Sulfolobus islandicus), this protein is GTP-dependent dephospho-CoA kinase.